A 538-amino-acid chain; its full sequence is Chaperonin GroEL 1 (538 aa).

ATP is bound by residues 30–33 (TLGP), K51, 87–91 (DGTTT), G415, 479–481 (NAA), and D495.

The protein belongs to the chaperonin (HSP60) family. In terms of assembly, forms a cylinder of 14 subunits composed of two heptameric rings stacked back-to-back. Interacts with the co-chaperonin GroES.

The protein localises to the cytoplasm. It carries out the reaction ATP + H2O + a folded polypeptide = ADP + phosphate + an unfolded polypeptide.. Together with its co-chaperonin GroES, plays an essential role in assisting protein folding. The GroEL-GroES system forms a nano-cage that allows encapsulation of the non-native substrate proteins and provides a physical environment optimized to promote and accelerate protein folding. The polypeptide is Chaperonin GroEL 1 (Chromobacterium violaceum (strain ATCC 12472 / DSM 30191 / JCM 1249 / CCUG 213 / NBRC 12614 / NCIMB 9131 / NCTC 9757 / MK)).